A 182-amino-acid chain; its full sequence is Peptidyl-prolyl cis-trans isomerase C, mitochondrial (182 aa).

The N-terminal 20 residues, 1–20, are a transit peptide targeting the mitochondrion; that stretch reads MFKRSIIQQSRLFSNSASRL. The PPIase cyclophilin-type domain occupies 25-181; it reads FFDPAVNGTK…AEIVIEEAGE (157 aa).

It belongs to the cyclophilin-type PPIase family.

The protein localises to the mitochondrion matrix. The enzyme catalyses [protein]-peptidylproline (omega=180) = [protein]-peptidylproline (omega=0). Inhibited by the immunosuppressant drug cyclosporin A and by SDZ NIM811, a PPIase inhibitor. In terms of biological role, PPIases accelerate the folding of proteins. It catalyzes the cis-trans isomerization of proline imidic peptide bonds in oligopeptides. This isozyme is required for growth on lactate at high temperature. The polypeptide is Peptidyl-prolyl cis-trans isomerase C, mitochondrial (CPR3) (Saccharomyces cerevisiae (strain ATCC 204508 / S288c) (Baker's yeast)).